The sequence spans 439 residues: Sodium-dependent phosphate transport protein 3 (439 aa).

N-linked (GlcNAc...) asparagine glycosylation is found at Asn-47, Asn-56, Asn-68, and Asn-69. 9 helical membrane passes run 98-118, 130-150, 183-203, 211-231, 273-293, 317-337, 350-369, 374-396, and 415-435; these read INYG…IFGA, SLLT…VIMV, TIAG…GGLI, FIFY…FTVI, LPLW…TIIL, LPFI…DFLL, LFSS…LPFV, VITI…GFII, and GFGL…ISQV.

The protein belongs to the major facilitator superfamily. Sodium/anion cotransporter family. Expressed in the small intestine, kidney, spleen and testis. Not detected in fetal brain, bone marrow, and mammary gland.

The protein resides in the apical cell membrane. The enzyme catalyses 3 Na(+)(out) + phosphate(out) = 3 Na(+)(in) + phosphate(in). The catalysed reaction is urate(out) + n chloride(in) = urate(in) + n chloride(out). In terms of biological role, acts as a membrane potential-dependent organic anion transporter, the transport requires a low concentration of chloride ions. Mediates chloride-dependent transport of urate. Can actively transport inorganic phosphate into cells via Na(+) cotransport. This chain is Sodium-dependent phosphate transport protein 3 (SLC17A2), found in Homo sapiens (Human).